The sequence spans 297 residues: Inosose dehydratase (297 aa).

The protein belongs to the IolE/MocC family. Glutathione serves as cofactor. Requires Co(2+) as cofactor. Mn(2+) is required as a cofactor.

The catalysed reaction is scyllo-inosose = 3D-3,5/4-trihydroxycyclohexane-1,2-dione + H2O. It participates in polyol metabolism; myo-inositol degradation into acetyl-CoA; acetyl-CoA from myo-inositol: step 2/7. In terms of biological role, catalyzes the dehydration of inosose (2-keto-myo-inositol, 2KMI or 2,4,6/3,5-pentahydroxycyclohexanone) to 3D-(3,5/4)-trihydroxycyclohexane-1,2-dione (D-2,3-diketo-4-deoxy-epi-inositol). The sequence is that of Inosose dehydratase from Clostridium perfringens (strain 13 / Type A).